The sequence spans 204 residues: Glideosome-associated protein 45 (204 aa).

The interval Met-1–Glu-86 is disordered. A lipid anchor (N-myristoyl glycine) is attached at Gly-2. Positions Gly-2–Lys-29 are targets GAP45 to the cell membrane; however, dispensable for the formation of the glideosome complex and the association with the inner membrane complex. Over residues Lys-9–Pro-53 the composition is skewed to basic and acidic residues. Residues Leu-54–Glu-73 are compositionally biased toward acidic residues. Residue Ser-89 is modified to Phosphoserine; by CPK10. A Phosphoserine; by CPK10 and PKB modification is found at Ser-103. At Ser-149 the chain carries Phosphoserine; by CPK10.

In terms of assembly, component of the glideosome complex composed of GAP50, GAP45, MTIP and MyoA; the complex is formed during the late schizont stage and in merozoites. MyoA, MTIP and GAP45 probably form an initial complex in the cytoplasm which is then recruited to the outer face of the inner membrane complex via the interaction with GAP50. Interacts with GAP50; the interaction is independent of GAP45 phosphorylation status and can also occur independently of the formation of the glideosome complex. Post-translationally, phosphorylated at multiple sites. Phosphorylation increases during the schizont stage and peaks in segmented merozoites. May be phosphorylated by PKB. In schizonts, phosphorylated at Ser-89 and Ser-149 in response to phospholipase C-mediated calcium release. Phosphorylation at Ser-149 begins in early schizonts while phosphorylation at Ser-103 begins in late schizonts. Phosphorylation at Ser-89, Ser-103 and Ser-149 appears to be dispensable for GAP45 inner membrane complex localization or GAP45 inclusion in the glideosome complex. Phosphorylation is not required for interaction with GAP50; however, it may regulate the interaction with MTIP and MyoA. In terms of processing, N-myristoylated by NMT. N-myristoylation may contribute to the targeting of GAP45 to the inner membrane complex with the subsequent palmitoylation strengthening the interaction with the membrane. Palmitoylated. Palmitoylation appears to follow N-myristoylation and may strengthen the interaction with the inner membrane complex.

The protein resides in the inner membrane complex. In terms of biological role, component of the glideosome complex, an inner membrane complex structure involved in parasite gliding motility and host cell invasion. During the asexual blood stage, required in schizonts to recruit MTIP and MyoA to the inner membrane complex where they assemble with GAP50 to form the glideosome complex. By regulating the formation of the glideosome, plays an essential role during merozoite invasion of host erythrocytes. The protein is Glideosome-associated protein 45 of Plasmodium falciparum (isolate 3D7).